A 372-amino-acid polypeptide reads, in one-letter code: Cytochrome b (372 aa).

4 helical membrane-spanning segments follow: residues Phe25–Ile45, Trp69–Ile90, Trp105–Leu125, and Phe170–Ile190. Heme b-binding residues include His75 and His89. Heme b contacts are provided by His174 and His188. His193 is an a ubiquinone binding site. 4 helical membrane-spanning segments follow: residues Tyr218–Ser238, Leu280–His300, Leu312–Ser332, and Phe339–Pro358.

This sequence belongs to the cytochrome b family. In terms of assembly, the cytochrome bc1 complex contains 3 respiratory subunits (MT-CYB, CYC1 and UQCRFS1), 2 core proteins (UQCRC1 and UQCRC2) and probably 6 low-molecular weight proteins. The cofactor is heme b.

It is found in the mitochondrion inner membrane. Its function is as follows. Component of the ubiquinol-cytochrome c reductase complex (complex III or cytochrome b-c1 complex) that is part of the mitochondrial respiratory chain. The b-c1 complex mediates electron transfer from ubiquinol to cytochrome c. Contributes to the generation of a proton gradient across the mitochondrial membrane that is then used for ATP synthesis. This chain is Cytochrome b (MT-CYB), found in Naja annulata annulata (Banded water cobra).